Reading from the N-terminus, the 1733-residue chain is MKVLFFSNKFPVEEHADLFQRIRQQSRSSRHAVLRQLLDECTAAVREEIRLLPAEIRTRLPPFQSILDLAEGFRWERSPLAGTFECVFLCLAELCLFVGDYEARPQAFKFTRSDSVFTGLGLGFLAATAIVASPTLIDVPATAADVIRIAMRAGLVVYHQGQNLEPQSLSAPLQSWTTLVKRLGEEAVQRELDCFNSAIPRPSQIYISVVEPDGSVFINGPPSIMRLLFSTPGPLQSAPRAPLPVYGGPCHAAHLYDRSHVSWIVKHVRSEIAWREFSDAAPLLSMADGQPLRAQTALELFESAAYVLLTGIIRWGNVLAALEEREDGAIQIESCGHSTPVEKLMRVLHAPTRDLTEWLSDEIEAVPGTHADCRIAVVGMSCRLPGADDLEHFWELLEQGRDVHQHVPPDRYDVQSHTDPTGRRMNTSQTPFGCFIDSPGLFDAGFFDMSPREAGQTDPTHRLALLTAYEALQQSGYIPDRTLSTIRETVATIYGQCSDDYREANAGQEIDMYFIPGNYRAFAPGRISYFFKFSGPSFSCDTACSASLAAVQIACATLSRGEANMVVAGGLNILTSSDSFAGLSRAHFLSKTGGCKVFDDGADGYCRADGVGSLVLKRLADAQRDNDNILGVILAAATNHSSAAVSITHPHAPTQEELYRNVLRQAGVSPLDVDLVEMHGTGTQAGDAAEIESVTRVFSPSRRSERLYIGSVKANLGHGEAAAGVTALIKALLIFQHNAIPKHVGIKTALNSRFPDLGQLNVHIPGETVPWSPRPNRKRYVMVNNFSAAGGNTALLLEEPPQRPTPGPACAQTRFVVTVSAKNPLSLRRNLERLMAFLRQHQPPVHLGSLAYTTTARRIHYPHRIAVQGASIADIIKHLELRLADLSLAHPQGAVARPPPIAFVFSGQGSFYPGISHDLLEHYPPYAREIHQLDALCLRHGFPSILPALTSSENSPSPLVTQLTTVCVQIALTHLWKSLAITPAVVIGASLGEYAALHATGALSASDTIFLVGQRGLLMQDLCTANTHTMLAVQATANEIAGCVPDSLSYEVACINSHRSITIAGTRSNITAIKASLESRGYRATELNVPYAFHSSHMDPILEKFNAIAQQATARALKVPLISPLLVDVLHEHTTLPASYLAEATRGRVRFSEALEKAHQATLITDQTVFVEIGIHPTYSNAVRSTVHNIAAVVPTLRSDQDNWHTLAGSMAALYEAAAGLDWNAWFEPFEPELRLLDLPRYAWNLKNHWIQHNGDWLLWKDKDRDRDNGKCMTHPDDGRGLYTPLLHRIVEETFWAGGGRVVMESNVHQEEFFAVASGHKMCGRPVVSVFSYPDMALSLARFVYTKVHPDISPPAMDFGNVHIFEGLIPHKDRSSPQWVRLQIKTTSVKHQLQVSFHRVGEDRVDQLATGTVSVGNAASWLSEWSGIAHLVSSRIKALQDLVHEGRADRLTRDTVYHLFRNSIVDYSPAYRGIQSAVIDGLEAVADVVLASSNMDRWTAPPHHVDSIAHVCGFVLNAGNAADHDNINTVYVMEGWRSMRFAKPLVSGRLYRSYVRMVPARDTGFFSGDVYVLDVAEDEVTGLLAGVTLRPLPRILMHRFFDPADDAHNWGNSPAKPEAKPEMVPTSGSSSAAGSPSGSSAGPLSIPERLADPSETSFQSKASKVSKALALIASETGIDMQDLNDETCLAQIGVDSLLSLVLVEKFALELGVHFPGSFFLDFPTVGEVKRQML.

The interval 21 to 358 (RIRQQSRSSR…HAPTRDLTEW (338 aa)) is N-terminal acylcarrier protein transacylase domain (SAT). Residues 372–799 (DCRIAVVGMS…GGNTALLLEE (428 aa)) enclose the Ketosynthase family 3 (KS3) domain. A compositionally biased stretch (basic and acidic residues) spans 406-422 (HVPPDRYDVQSHTDPTG). The disordered stretch occupies residues 406 to 429 (HVPPDRYDVQSHTDPTGRRMNTSQ). Catalysis depends on for beta-ketoacyl synthase activity residues Cys-544, His-679, and His-718. The segment at 903 to 1211 (FVFSGQGSFY…DNWHTLAGSM (309 aa)) is malonyl-CoA:ACP transacylase (MAT) domain. An N-terminal hotdog fold region spans residues 1288–1420 (HRIVEETFWA…GTVSVGNAAS (133 aa)). A PKS/mFAS DH domain is found at 1288 to 1598 (HRIVEETFWA…LRPLPRILMH (311 aa)). The segment at 1299–1594 (GGRVVMESNV…AGVTLRPLPR (296 aa)) is product template (PT) domain. His-1320 acts as the Proton acceptor; for dehydratase activity in catalysis. Positions 1448–1598 (ADRLTRDTVY…LRPLPRILMH (151 aa)) are C-terminal hotdog fold. The active-site Proton donor; for dehydratase activity is Asp-1506. Residues 1608 to 1659 (HNWGNSPAKPEAKPEMVPTSGSSSAAGSPSGSSAGPLSIPERLADPSETSFQ) are disordered. Residues 1627 to 1643 (SGSSSAAGSPSGSSAGP) are compositionally biased toward low complexity. In terms of domain architecture, Carrier spans 1659-1733 (QSKASKVSKA…TVGEVKRQML (75 aa)). The residue at position 1696 (Ser-1696) is an O-(pantetheine 4'-phosphoryl)serine.

Requires pantetheine 4'-phosphate as cofactor.

Its pathway is secondary metabolite biosynthesis. Non-reducing polyketide synthase; part of the gene cluster that mediates the biosynthesis of the bicoumarin desertorin. The non-reducing polyketide synthase desS first catalyzes the formation of the pentaketidic 4,7-dihydroxy-5-methylcoumarin from acetyl coenzyme A and 4 malonyl coenzyme A molecules. Further O-methylation by desB leads to the formation of 7-demethylsiderin. Then, an oxidative phenol coupling catalyzed by the cytochrome P450 monooxygenase desC forms the 6,8'-dimer M-desertorin A via dimerization the monomeric precursor, 7-demethylsiderin. M-desertorin A is further converted to M-desertorin C. The polypeptide is Desertorin synthase (Aspergillus desertorum (Emericella desertorum)).